The sequence spans 806 residues: Hyperosmolality-gated Ca2+ permeable channel 1.8 (806 aa).

Transmembrane regions (helical) follow at residues 7 to 27 (IGVS…AFAV), 102 to 122 (IYTL…VVLV), 157 to 177 (KFFF…FMLY), 375 to 395 (LVIG…IAFV), 427 to 447 (FLPG…LLIM), 467 to 487 (YYYF…TAFE), 512 to 532 (ATFF…GEIL), 576 to 596 (FLLG…ILIF), 626 to 646 (VHGR…GLLA), and 650 to 670 (AADS…FHKY). The tract at residues 726–786 (SSSSSSEKET…HYASAYEQSS (61 aa)) is disordered. Positions 731 to 750 (SEKETHQEETPEVRVDKHET) are enriched in basic and acidic residues. At Thr-735 the chain carries Phosphothreonine. Residues 751–762 (QSSSPVTELGTS) show a composition bias toward polar residues. The segment covering 775 to 786 (SSHYASAYEQSS) has biased composition (low complexity).

The protein belongs to the CSC1 (TC 1.A.17) family.

The protein resides in the golgi apparatus membrane. It is found in the cell membrane. Acts as an osmosensitive calcium-permeable cation channel. This is Hyperosmolality-gated Ca2+ permeable channel 1.8 from Arabidopsis thaliana (Mouse-ear cress).